We begin with the raw amino-acid sequence, 670 residues long: Beta-lactam-inducible penicillin-binding protein (670 aa).

Residues 4 to 24 form a helical membrane-spanning segment; that stretch reads IKIVPLILIVVVVGFGIYFYA. Residues Ser-25 and Ser-405 each contribute to the a penicillin site. Ser-405 functions as the Acyl-ester intermediate in the catalytic mechanism.

Belongs to the transpeptidase family.

Its subcellular location is the cell membrane. The polypeptide is Beta-lactam-inducible penicillin-binding protein (pbp) (Staphylococcus aureus).